The chain runs to 521 residues: Acetylcholine receptor subunit beta-like 1 (521 aa).

Residues 1–24 form the signal peptide; that stretch reads MESSCKSWLLCSILVLVAFSLVSA. Residues 25 to 235 are Extracellular-facing; the sequence is SEDEERLVRD…ITFYIIIRRK (211 aa). N48 carries N-linked (GlcNAc...) asparagine glycosylation. C152 and C166 form a disulfide bridge. The next 3 helical transmembrane spans lie at 236–260, 268–286, and 302–323; these read TLFY…VFYL, VTLG…LLVS, and YLLF…IINW. The Cytoplasmic segment spans residues 324–481; it reads NFRGPRTHRM…WKYVAMVIDR (158 aa). The chain crosses the membrane as a helical span at residues 482-500; sequence LQLYIFFIVTTAGTVGILM.

It belongs to the ligand-gated ion channel (TC 1.A.9) family. Acetylcholine receptor (TC 1.A.9.1) subfamily. CNS in embryos.

It is found in the postsynaptic cell membrane. Its subcellular location is the cell membrane. In terms of biological role, after binding acetylcholine, the AChR responds by an extensive change in conformation that affects all subunits and leads to opening of an ion-conducting channel across the plasma membrane. The protein is Acetylcholine receptor subunit beta-like 1 (nAChRbeta1) of Drosophila melanogaster (Fruit fly).